A 326-amino-acid polypeptide reads, in one-letter code: Vacuolar protein sorting-associated protein 26A (326 aa).

The protein belongs to the VPS26 family. Component of the heterotrimeric retromer cargo-selective complex (CSC) which is believed to associate with variable sorting nexins to form functionally distinct retromer complex variants.

It is found in the cytoplasm. It localises to the endosome membrane. The protein resides in the early endosome. Acts as a component of the retromer cargo-selective complex (CSC). The CSC is believed to be the core functional component of retromer or respective retromer complex variants acting to prevent missorting of selected transmembrane cargo proteins into the lysosomal degradation pathway. Retromer mediates retrograde transport of cargo proteins from endosomes to the trans-Golgi network (TGN). This is Vacuolar protein sorting-associated protein 26A (vps26a) from Xenopus tropicalis (Western clawed frog).